A 472-amino-acid polypeptide reads, in one-letter code: Argininosuccinate lyase (472 aa).

The protein belongs to the lyase 1 family. Argininosuccinate lyase subfamily.

Its subcellular location is the cytoplasm. It carries out the reaction 2-(N(omega)-L-arginino)succinate = fumarate + L-arginine. The protein operates within amino-acid biosynthesis; L-arginine biosynthesis; L-arginine from L-ornithine and carbamoyl phosphate: step 3/3. This Syntrophus aciditrophicus (strain SB) protein is Argininosuccinate lyase.